Reading from the N-terminus, the 982-residue chain is Serine/threonine-protein kinase SULU (982 aa).

The Protein kinase domain occupies 30–289; sequence YQDLREIGHG…AEECFRHPFI (260 aa). ATP is bound by residues 36–44 and Lys-59; that span reads IGHGSFGAV. The active-site Proton acceptor is the Asp-153. 4 disordered regions span residues 331 to 484, 592 to 620, 751 to 789, and 957 to 982; these read GKEG…PLDT, QNNE…QNQQ, LETQ…RDLK, and RTGS…QMAM. Residues 353–373 are compositionally biased toward low complexity; sequence SIGRAGDSASSRSASLTSFRS. Residues 421–431 show a composition bias toward polar residues; it reads QMLSSTSTSGV. Residues 459 to 472 are compositionally biased toward low complexity; sequence IPTSQPTSKSESSS. Residues 595–608 are compositionally biased toward basic and acidic residues; it reads ELDKRKKDIEDGEK. Residues 759–768 show a composition bias toward polar residues; that stretch reads SASQNEYTQR. Residues 957–967 show a composition bias toward low complexity; it reads RTGSTSRSSGG. Residues 973–982 are compositionally biased toward polar residues; it reads GNSSSIQMAM.

It belongs to the protein kinase superfamily. Ser/Thr protein kinase family. STE20 subfamily. Mg(2+) serves as cofactor. Expressed in the pharynx, including the pharyngeal muscle of the metacorpus, the isthmus, and the terminal bulb; in the intestine, including the pharyngeointestinal valve between the pharynx and the intestine, a structure near the anus likely to be the anal sphincter and the excretory cell and in several ring neurons.

The protein resides in the cytoplasm. It localises to the cytoskeleton. It is found in the cell cortex. It carries out the reaction L-seryl-[protein] + ATP = O-phospho-L-seryl-[protein] + ADP + H(+). The enzyme catalyses L-threonyl-[protein] + ATP = O-phospho-L-threonyl-[protein] + ADP + H(+). Functionally, acts as a negative regulator of cortical contractions during early embryonic cell division, possibly by regulating rho-1-dependent actomyosin contractility. Plays a role in polarity establishment in early embryos by regulating the size of the anterior and posterior cortex in the first asymmetric cell division. Might play a role in cell cycle progression. In the germline, involved in the regulation of meiotic progression during oogenesis, possibly by modulating the timing of mpk-1 activation. Plays a role in meiotic recombination events. Involved in pharyngeal pumping. This Caenorhabditis elegans protein is Serine/threonine-protein kinase SULU (kin-18).